Here is a 595-residue protein sequence, read N- to C-terminus: Myb-like protein D (595 aa).

Disordered stretches follow at residues 1-47 (MQQQ…NGLV), 55-74 (QQYQDDQNDSFDDDSMDEGE), 82-266 (DESQ…NNRK), and 319-445 (VLQK…IWTQ). Positions 19–47 (DNYNNNNSNINTNNNNSINDYENQNNGLV) are enriched in low complexity. A compositionally biased stretch (acidic residues) spans 60–74 (DQNDSFDDDSMDEGE). 2 stretches are compositionally biased toward low complexity: residues 90–212 (NNNN…ENNN) and 225–264 (NNNNNNNNNNNNNNNNNNNNNNNNKNNNNNNNNNNNNNNN). A compositionally biased stretch (basic residues) spans 324 to 348 (TLNRNRSRSRSRSNSRSHSRSRSRS). 2 stretches are compositionally biased toward low complexity: residues 349-368 (RSLSSISRSRSRSRLIYSRS) and 376-420 (NNNN…NNNN). Basic and acidic residues predominate over residues 423-434 (RKSEDDNQDDGK). The HTH myb-type domain occupies 435–489 (KKHRKNAIWTQEEDEKMAQLYNKYGKSWKAIHSHFDDKTREQVQSHGQYLIRIGK). Positions 462-485 (WKAIHSHFDDKTREQVQSHGQYLI) form a DNA-binding region, H-T-H motif. The segment at 494–595 (HRDGRKERRK…NSSNYVNNDN (102 aa)) is disordered. The span at 517–595 (QQNQQNNNNN…NSSNYVNNDN (79 aa)) shows a compositional bias: low complexity.

It is found in the nucleus. This Dictyostelium discoideum (Social amoeba) protein is Myb-like protein D (mybD).